The following is a 433-amino-acid chain: uncharacterized protein (433 aa).

11 helical membrane-spanning segments follow: residues 28 to 48 (FAALGPGILMASAAVGGSHII), 56 to 76 (IYGWQLAIIIILANLFKYPFF), 102 to 122 (IWIFFLLNVFATVINTAAVGL), 126 to 146 (AILTFVLPVQVPVPTLSFIVI), 164 to 184 (LSKLIMIALTITTVSAVIIAL), 207 to 227 (ALGFIVALMGWMPAPIEISAI), 250 to 270 (FNVGYIGTAILALVFLALGAL), 304 to 324 (GLIAFIAFMCMFGTTITVIDG), 345 to 365 (SYLNVAITFAALAGLAIIFYF), 375 to 395 (FAMIASFVSTPVFAYLNLSLV), and 406 to 426 (LLWLSLIGLMYLTSFTLLFIA).

It is found in the cell membrane. This is an uncharacterized protein from Pasteurella multocida (strain Pm70).